Consider the following 314-residue polypeptide: Replication initiation protein (314 aa).

Over residues 1–18 (MSKKAEEIQAKQSLEKEN) the composition is skewed to basic and acidic residues. Positions 1 to 25 (MSKKAEEIQAKQSLEKENSNFSKTG) are disordered.

It belongs to the plasmid replication initiation factor family.

This protein is probably a specific topoisomerase involved in initiating replication. This protein is specifically required and may be rate-limiting for replication of the plasmid in vivo. This is Replication initiation protein (repE) from Staphylococcus aureus.